Consider the following 203-residue polypeptide: Nucleoside triphosphate pyrophosphatase (203 aa).

Asp-77 acts as the Proton acceptor in catalysis.

The protein belongs to the Maf family. A divalent metal cation is required as a cofactor.

It localises to the cytoplasm. It carries out the reaction a ribonucleoside 5'-triphosphate + H2O = a ribonucleoside 5'-phosphate + diphosphate + H(+). It catalyses the reaction a 2'-deoxyribonucleoside 5'-triphosphate + H2O = a 2'-deoxyribonucleoside 5'-phosphate + diphosphate + H(+). Nucleoside triphosphate pyrophosphatase. May have a dual role in cell division arrest and in preventing the incorporation of modified nucleotides into cellular nucleic acids. This is Nucleoside triphosphate pyrophosphatase from Rickettsia felis (strain ATCC VR-1525 / URRWXCal2) (Rickettsia azadi).